The chain runs to 173 residues: Peptide methionine sulfoxide reductase MsrA (173 aa).

The active site involves Cys10.

Belongs to the MsrA Met sulfoxide reductase family.

The enzyme catalyses L-methionyl-[protein] + [thioredoxin]-disulfide + H2O = L-methionyl-(S)-S-oxide-[protein] + [thioredoxin]-dithiol. It carries out the reaction [thioredoxin]-disulfide + L-methionine + H2O = L-methionine (S)-S-oxide + [thioredoxin]-dithiol. Has an important function as a repair enzyme for proteins that have been inactivated by oxidation. Catalyzes the reversible oxidation-reduction of methionine sulfoxide in proteins to methionine. The chain is Peptide methionine sulfoxide reductase MsrA from Psychrobacter arcticus (strain DSM 17307 / VKM B-2377 / 273-4).